The following is a 223-amino-acid chain: Phosphoribosylformylglycinamidine synthase subunit PurQ (223 aa).

Residues 2–223 enclose the Glutamine amidotransferase type-1 domain; sequence KIAVVVFPGS…KSLLKAGVQA (222 aa). Cysteine 86 serves as the catalytic Nucleophile. Active-site residues include histidine 195 and glutamate 197.

As to quaternary structure, part of the FGAM synthase complex composed of 1 PurL, 1 PurQ and 2 PurS subunits.

It is found in the cytoplasm. The enzyme catalyses N(2)-formyl-N(1)-(5-phospho-beta-D-ribosyl)glycinamide + L-glutamine + ATP + H2O = 2-formamido-N(1)-(5-O-phospho-beta-D-ribosyl)acetamidine + L-glutamate + ADP + phosphate + H(+). It catalyses the reaction L-glutamine + H2O = L-glutamate + NH4(+). The protein operates within purine metabolism; IMP biosynthesis via de novo pathway; 5-amino-1-(5-phospho-D-ribosyl)imidazole from N(2)-formyl-N(1)-(5-phospho-D-ribosyl)glycinamide: step 1/2. In terms of biological role, part of the phosphoribosylformylglycinamidine synthase complex involved in the purines biosynthetic pathway. Catalyzes the ATP-dependent conversion of formylglycinamide ribonucleotide (FGAR) and glutamine to yield formylglycinamidine ribonucleotide (FGAM) and glutamate. The FGAM synthase complex is composed of three subunits. PurQ produces an ammonia molecule by converting glutamine to glutamate. PurL transfers the ammonia molecule to FGAR to form FGAM in an ATP-dependent manner. PurS interacts with PurQ and PurL and is thought to assist in the transfer of the ammonia molecule from PurQ to PurL. The chain is Phosphoribosylformylglycinamidine synthase subunit PurQ from Lactobacillus acidophilus (strain ATCC 700396 / NCK56 / N2 / NCFM).